The following is a 405-amino-acid chain: S-arrestin (405 aa).

Thr-234 carries the phosphothreonine modification.

It belongs to the arrestin family. In terms of assembly, monomer. Homodimer. Homotetramer. Interacts with RHO (via the phosphorylated C-terminus).

It is found in the cell projection. The protein resides in the cilium. It localises to the photoreceptor outer segment. Its subcellular location is the membrane. Binds to photoactivated, phosphorylated RHO and terminates RHO signaling via G-proteins by competing with G-proteins for the same binding site on RHO. May play a role in preventing light-dependent degeneration of retinal photoreceptor cells. The chain is S-arrestin (SAG) from Canis lupus familiaris (Dog).